A 172-amino-acid polypeptide reads, in one-letter code: Centrin-2 (172 aa).

The interval 1–31 (MASNFKKANMASTTQRKRMSPKPELTEEQKQ) is disordered. Position 2 is an N-acetylalanine (Ala2). The interval 2 to 25 (ASNFKKANMASTTQRKRMSPKPEL) is required for self-assembly. Phosphoserine is present on Ser20. Lys22 is covalently cross-linked (Glycyl lysine isopeptide (Lys-Gly) (interchain with G-Cter in SUMO2)). Thr26 carries the phosphothreonine modification. 4 EF-hand domains span residues 28-63 (EQKQEIREAFDLFDADGTGTIDVKELKVAMRALGFE), 64-99 (PKKEEIKKMISEIDKEGTGKMNFSDFLTVMTQKMSE), 101-136 (DTKEEILKAFKLFDDDETGKISFKNLKRVAKELGEN), and 137-172 (LSDEELQEMIDEADRDGDGEVNEQEFLRIMKKTSLY). Residues Asp41, Asp43, Thr45, Thr47, and Glu52 each coordinate Ca(2+). Ca(2+) is bound by residues Asp150, Asp152, Asp154, Glu156, and Glu161.

The protein belongs to the centrin family. In terms of assembly, monomer. Homooligomer. Interacts with CCP110, SFI1. Component of the XPC complex composed of XPC, RAD23B and CETN2. Component of the nuclear pore complex (NPC)-associated TREX-2 complex (transcription and export complex 2), composed of at least GANP, 2 copies of ENY2, PCID2, SEM1/DSS1, and either centrin CETN2 or centrin CETN3. The TREX-2 complex also associates with ALYREF/ALY and with the nucleoporin NUP153. Interacts with USP49. Forms a microtubule-associated complex with POC5, POC1B and FAM161A. Interacts with CCDC15.

The protein resides in the cytoplasm. Its subcellular location is the cytoskeleton. It localises to the microtubule organizing center. It is found in the centrosome. The protein localises to the centriole. The protein resides in the nucleus. Its subcellular location is the nucleus envelope. It localises to the nuclear pore complex. Its function is as follows. Plays a fundamental role in microtubule organizing center structure and function. Required for centriole duplication and correct spindle formation. Has a role in regulating cytokinesis and genome stability via cooperation with CALM1 and CCP110. In terms of biological role, involved in global genome nucleotide excision repair (GG-NER) by acting as component of the XPC complex. Cooperatively with RAD23B appears to stabilize XPC. In vitro, stimulates DNA binding of the XPC:RAD23B dimer. The XPC complex is proposed to represent the first factor bound at the sites of DNA damage and together with other core recognition factors, XPA, RPA and the TFIIH complex, is part of the pre-incision (or initial recognition) complex. The XPC complex recognizes a wide spectrum of damaged DNA characterized by distortions of the DNA helix such as single-stranded loops, mismatched bubbles or single-stranded overhangs. The orientation of XPC complex binding appears to be crucial for inducing a productive NER. XPC complex is proposed to recognize and to interact with unpaired bases on the undamaged DNA strand which is followed by recruitment of the TFIIH complex and subsequent scanning for lesions in the opposite strand in a 5'-to-3' direction by the NER machinery. Cyclobutane pyrimidine dimers (CPDs) which are formed upon UV-induced DNA damage esacpe detection by the XPC complex due to a low degree of structural perurbation. Instead they are detected by the UV-DDB complex which in turn recruits and cooperates with the XPC complex in the respective DNA repair. Functionally, as a component of the TREX-2 complex, involved in the export of mRNAs to the cytoplasm through the nuclear pores. This chain is Centrin-2 (CETN2), found in Bos taurus (Bovine).